We begin with the raw amino-acid sequence, 305 residues long: MAAAGQEKGYLTQTAAALDKSPSLSPQLAAPIRGRPKKCLVYPHAPKSSRLSRSVLRWLQGLDLSFFPRNINRDFSNGFLIAEIFCIYYPWELELSSFENGTSLKVKLDNWAQLEKFLARKKFKLPKELIHGTIHCKAGVPEILIEEVYTLLTHREIKSIQDDFVNFTDYSYQMRLPLVSRSTVSKSIKDNIRLSELLSNPNMLTNELKAEFLILLHMLQRKLGRKLNPEWFDVKPTVGEVTLNHLPAQASGRRYNLKVKRGRVVPVLPNIGSGGSSHREIHVKQAGQHSYYSAMKPIRNMDKKP.

Residues 49–155 (SRLSRSVLRW…EEVYTLLTHR (107 aa)) form the Calponin-homology (CH) domain.

In terms of tissue distribution, highly expressed in testis, the expression is observed precisely in seminiferous tubules.

Its subcellular location is the nucleus. Its function is as follows. May play a role in apoptosis regulation. The sequence is that of Spermatogenesis-associated protein 4 (SPATA4) from Homo sapiens (Human).